The sequence spans 530 residues: Ubiquitin carboxyl-terminal hydrolase 17 (530 aa).

Residues Ala80–Lys375 enclose the USP domain. Cys89 functions as the Nucleophile in the catalytic mechanism. Residue His334 is the Proton acceptor of the active site. Composition is skewed to basic and acidic residues over residues Ser382–Arg392 and Asp398–Pro413. 2 disordered regions span residues Ser382–Gln416 and Ser490–Gln530. The tract at residues Thr399–Gln530 is mediates interaction with SUDS3. Residues Glu498–Gly510 are compositionally biased toward polar residues. The span at Arg511 to Arg524 shows a compositional bias: basic residues.

It belongs to the peptidase C19 family. USP17 subfamily. Interacts with SUDS3; the interaction is direct. In terms of tissue distribution, broadly expressed.

It localises to the nucleus. Its subcellular location is the endoplasmic reticulum. It carries out the reaction Thiol-dependent hydrolysis of ester, thioester, amide, peptide and isopeptide bonds formed by the C-terminal Gly of ubiquitin (a 76-residue protein attached to proteins as an intracellular targeting signal).. Functionally, deubiquitinating enzyme that removes conjugated ubiquitin from specific proteins to regulate different cellular processes. Regulates cell proliferation by deubiquitinating and inhibiting RCE1 thereby controlling the small GTPases NRAS and HRAS localization and activation. In parallel, mediates deubiquitination of CDC25A, preventing CDC25A degradation by the proteasome during the G1/S and G2/M phases promoting cell-cycle progression. Also regulates cell proliferation and apoptosis through deubiquitination of SUDS3 a regulator of histone deacetylation. Through activation of the Rho family GTPases RAC1A, CDC42 and RHOA, regulates cell migration. Through the cleavage of 'Lys-48'- and 'Lys-63'-linked polyubiquitin chains of the cytoplasmic innate immune receptors RIGI and IFIH1 stimulates the cellular response to viral infection. The sequence is that of Ubiquitin carboxyl-terminal hydrolase 17 (USP17L2) from Homo sapiens (Human).